Here is a 470-residue protein sequence, read N- to C-terminus: Outer capsid protein sigma-1 (470 aa).

Positions 1-324 are tail; the sequence is MDASLITEIR…LELDTANNRV (324 aa). An N-linked (GlcNAc...) asparagine; by host glycan is attached at asparagine 21. The stretch at 26-46 forms a coiled coil; sequence KEIEEIKKQVQVNVDDIRAAN. Residues asparagine 121, asparagine 205, and asparagine 353 are each glycosylated (N-linked (GlcNAc...) asparagine; by host). The tract at residues 325-470 is head; it reads QVADRFGMRT…WTIMYPCNVR (146 aa).

Belongs to the orthoreovirus sigma-1 protein family. In terms of assembly, homotrimer. Interacts (via the head region) with human F11R. In terms of processing, undergoes dramatic conformational rearrangements during viral disassembly in the endocytic pathway.

The protein localises to the virion. Its function is as follows. Fiber-like molecule that attaches the virion to the host cell membrane by binding to the primary receptor F11R/JAM-A and to sialic acid containing proteins (coreceptor). The interaction of sigma-1 with F11R is required for NF-kB activation and apoptosis. Binding to both sialic acid and F11R is required to induce maximal levels of apoptosis. The chain is Outer capsid protein sigma-1 (S1) from Reovirus type 1 (strain Lang) (T1L).